A 379-amino-acid polypeptide reads, in one-letter code: Cobalt-precorrin-5B C(1)-methyltransferase (379 aa).

The protein belongs to the CbiD family.

It catalyses the reaction Co-precorrin-5B + S-adenosyl-L-methionine = Co-precorrin-6A + S-adenosyl-L-homocysteine. It functions in the pathway cofactor biosynthesis; adenosylcobalamin biosynthesis; cob(II)yrinate a,c-diamide from sirohydrochlorin (anaerobic route): step 6/10. Catalyzes the methylation of C-1 in cobalt-precorrin-5B to form cobalt-precorrin-6A. The protein is Cobalt-precorrin-5B C(1)-methyltransferase of Salmonella heidelberg (strain SL476).